Reading from the N-terminus, the 229-residue chain is Heptaprenylglyceryl phosphate synthase (229 aa).

Residue lysine 12 coordinates sn-glycerol 1-phosphate. Mg(2+) contacts are provided by aspartate 14 and serine 40. Sn-glycerol 1-phosphate-binding positions include 159–164 (YLEYSG), glycine 189, and 209–210 (GN).

This sequence belongs to the GGGP/HepGP synthase family. Group I subfamily. In terms of assembly, homodimer. It depends on Mg(2+) as a cofactor.

The catalysed reaction is sn-glycerol 1-phosphate + all-trans-heptaprenyl diphosphate = 3-heptaprenyl-sn-glycero-1-phosphate + diphosphate. It functions in the pathway membrane lipid metabolism; glycerophospholipid metabolism. In terms of biological role, prenyltransferase that catalyzes in vivo the transfer of the heptaprenyl moiety of heptaprenyl pyrophosphate (HepPP; 35 carbon atoms) to the C3 hydroxyl of sn-glycerol-1-phosphate (G1P), producing heptaprenylglyceryl phosphate (HepGP). This reaction is an ether-bond-formation step in the biosynthesis of archaea-type G1P-based membrane lipids found in Bacillales. This is Heptaprenylglyceryl phosphate synthase from Bacillus cereus (strain ATCC 10987 / NRS 248).